The following is a 908-amino-acid chain: Structural core protein VP2 (908 aa).

The span at 1 to 19 (MANPQNRVQTERQQNNSSP) shows a compositional bias: polar residues. Residues 1 to 25 (MANPQNRVQTERQQNNSSPYLRGDE) form a disordered region.

It belongs to the orbivirus VP3 family.

The protein resides in the virion. The polypeptide is Structural core protein VP2 (Segment-2) (Ixodes (gulls)).